The primary structure comprises 352 residues: Phosphate acyltransferase (352 aa).

Positions 328-339 (ESFPGDAREREG) are enriched in basic and acidic residues. The disordered stretch occupies residues 328–352 (ESFPGDAREREGAQAPDAGTERVAS).

The protein belongs to the PlsX family. As to quaternary structure, homodimer. Probably interacts with PlsY.

It is found in the cytoplasm. It carries out the reaction a fatty acyl-[ACP] + phosphate = an acyl phosphate + holo-[ACP]. Its pathway is lipid metabolism; phospholipid metabolism. In terms of biological role, catalyzes the reversible formation of acyl-phosphate (acyl-PO(4)) from acyl-[acyl-carrier-protein] (acyl-ACP). This enzyme utilizes acyl-ACP as fatty acyl donor, but not acyl-CoA. The protein is Phosphate acyltransferase of Geobacter sp. (strain M21).